Consider the following 553-residue polypeptide: Formate--tetrahydrofolate ligase (553 aa).

56–63 is a binding site for ATP; the sequence is TPKGEGKT.

It belongs to the formate--tetrahydrofolate ligase family.

The enzyme catalyses (6S)-5,6,7,8-tetrahydrofolate + formate + ATP = (6R)-10-formyltetrahydrofolate + ADP + phosphate. The protein operates within one-carbon metabolism; tetrahydrofolate interconversion. This is Formate--tetrahydrofolate ligase from Haloarcula marismortui (strain ATCC 43049 / DSM 3752 / JCM 8966 / VKM B-1809) (Halobacterium marismortui).